Consider the following 70-residue polypeptide: Peptide BmKn1 (70 aa).

A signal peptide spans 1 to 23 (MKSQTFFLLFLVVLLLAISQSEA). Phe36 bears the Phenylalanine amide mark. Positions 40–70 (SMRDMDTMKYLYDPSLSAADLKTLQKLMENY) are excised as a propeptide.

The protein belongs to the non-disulfide-bridged peptide (NDBP) superfamily. Short antimicrobial peptide (group 4) family. Expressed by the venom gland.

Its subcellular location is the secreted. The protein resides in the target cell membrane. Antibacterial peptide. The sequence is that of Peptide BmKn1 from Olivierus martensii (Manchurian scorpion).